The sequence spans 444 residues: Exodeoxyribonuclease 7 large subunit (444 aa).

It belongs to the XseA family. In terms of assembly, heterooligomer composed of large and small subunits.

The protein localises to the cytoplasm. It catalyses the reaction Exonucleolytic cleavage in either 5'- to 3'- or 3'- to 5'-direction to yield nucleoside 5'-phosphates.. Functionally, bidirectionally degrades single-stranded DNA into large acid-insoluble oligonucleotides, which are then degraded further into small acid-soluble oligonucleotides. The protein is Exodeoxyribonuclease 7 large subunit of Pseudoalteromonas translucida (strain TAC 125).